Here is a 428-residue protein sequence, read N- to C-terminus: Elongation factor 1-alpha (428 aa).

In terms of domain architecture, tr-type G spans 5–225; it reads KPILNVAFIG…DAFQPPEKPT (221 aa). The G1 stretch occupies residues 14–21; it reads GHVDAGKS. 14–21 lines the GTP pocket; it reads GHVDAGKS. A Mg(2+)-binding site is contributed by Ser21. Residues 70-74 form a G2 region; sequence GVTID. Positions 91 to 94 are G3; sequence DCPG. GTP is bound by residues 91-95 and 149-152; these read DCPGH and NKMD. A G4 region spans residues 149–152; sequence NKMD. Residues 189–191 are G5; the sequence is ASL.

The protein belongs to the TRAFAC class translation factor GTPase superfamily. Classic translation factor GTPase family. EF-Tu/EF-1A subfamily.

It localises to the cytoplasm. It carries out the reaction GTP + H2O = GDP + phosphate + H(+). Its function is as follows. GTP hydrolase that promotes the GTP-dependent binding of aminoacyl-tRNA to the A-site of ribosomes during protein biosynthesis. This is Elongation factor 1-alpha from Methanococcus maripaludis (strain C6 / ATCC BAA-1332).